The primary structure comprises 67 residues: Large ribosomal subunit protein uL29 (67 aa).

The protein belongs to the universal ribosomal protein uL29 family.

The chain is Large ribosomal subunit protein uL29 from Wolbachia pipientis wMel.